Here is a 331-residue protein sequence, read N- to C-terminus: Proline-rich protein 33 (331 aa).

Disordered stretches follow at residues 1-112 (MGPQ…SVPR), 128-185 (SLES…PKVA), and 204-247 (APEP…APAS). Over residues 94–105 (PEEPPVPRPPPG) the composition is skewed to pro residues. A compositionally biased stretch (low complexity) spans 149–169 (PPMAGPAAEAERVSSPAWASS). Positions 170–185 (PTPPSGPHPCPVPKVA) are enriched in pro residues. The segment covering 217-238 (EPEVPTPTEQEVPAPTEQEVPA) has biased composition (low complexity).

This is Proline-rich protein 33 (PRR33) from Homo sapiens (Human).